A 207-amino-acid chain; its full sequence is LexA repressor (207 aa).

Residues 28-48 constitute a DNA-binding region (H-T-H motif); it reads VREIAVAVGLASSSTVHGHLE. Catalysis depends on for autocatalytic cleavage activity residues Ser129 and Lys167.

It belongs to the peptidase S24 family. As to quaternary structure, homodimer.

The catalysed reaction is Hydrolysis of Ala-|-Gly bond in repressor LexA.. Functionally, represses a number of genes involved in the response to DNA damage (SOS response), including recA and lexA. In the presence of single-stranded DNA, RecA interacts with LexA causing an autocatalytic cleavage which disrupts the DNA-binding part of LexA, leading to derepression of the SOS regulon and eventually DNA repair. The polypeptide is LexA repressor (Oceanobacillus iheyensis (strain DSM 14371 / CIP 107618 / JCM 11309 / KCTC 3954 / HTE831)).